The chain runs to 321 residues: Protein stand still (321 aa).

Coiled coils occupy residues 74–103 (KLHEMKVAALEERRDRIMKNRRFAKSRKKA) and 147–167 (KQEQEGATRKLEDSTSDKANL). Positions 146–162 (HKQEQEGATRKLEDSTS) are enriched in basic and acidic residues. Disordered regions lie at residues 146 to 166 (HKQEQEGATRKLEDSTSDKAN) and 227 to 248 (QVPPVQGESKSSGSLASSMEDV). Low complexity predominate over residues 235-244 (SKSSGSLASS). A coiled-coil region spans residues 272–292 (QRDVLQRLERSMAQISQELHC).

In terms of tissue distribution, germ cells specific. Expressed in all germ cells. During the first instar larvae, it is expressed in all germ cells of both sexes. In third instar larvae, it decreases in male germ cells while it remains in female germ cells. In adult ovary, it is expressed in cells of the germarium, including the stem cells. In the early previtellogenic stages, it is highly expressed in the nurse cells. During vitellogenesis, it is not translocated into the maturing egg. In testes, it is only expressed during some steps of male germline differentiation. At the apex testis, it is expressed at low level in stem cells and dividing spermatogonia, while in newly formed 16-cell cysts of primary spermatocytes, it is transiently but strongly expressed before vanishing during spermatocyte growth phase.

It localises to the nucleus. Functionally, essential in the female germline for proper survival, sex determination and differentiation. Participates in the transcriptional activation of Otu. Does not regulate the expression of Ovo. This Drosophila melanogaster (Fruit fly) protein is Protein stand still (stil).